The primary structure comprises 188 residues: UPF0157 protein DR_2534 (188 aa).

Positions M1–R12 are enriched in gly residues. A disordered region spans residues M1–D37.

It belongs to the UPF0157 (GrpB) family.

In Deinococcus radiodurans (strain ATCC 13939 / DSM 20539 / JCM 16871 / CCUG 27074 / LMG 4051 / NBRC 15346 / NCIMB 9279 / VKM B-1422 / R1), this protein is UPF0157 protein DR_2534.